The sequence spans 344 residues: 4-hydroxy-3-methylbut-2-en-1-yl diphosphate synthase (flavodoxin) (344 aa).

Cys253, Cys256, Cys288, and Glu295 together coordinate [4Fe-4S] cluster.

It belongs to the IspG family. [4Fe-4S] cluster is required as a cofactor.

The catalysed reaction is (2E)-4-hydroxy-3-methylbut-2-enyl diphosphate + oxidized [flavodoxin] + H2O + 2 H(+) = 2-C-methyl-D-erythritol 2,4-cyclic diphosphate + reduced [flavodoxin]. Its pathway is isoprenoid biosynthesis; isopentenyl diphosphate biosynthesis via DXP pathway; isopentenyl diphosphate from 1-deoxy-D-xylulose 5-phosphate: step 5/6. Its function is as follows. Converts 2C-methyl-D-erythritol 2,4-cyclodiphosphate (ME-2,4cPP) into 1-hydroxy-2-methyl-2-(E)-butenyl 4-diphosphate. In Thermotoga maritima (strain ATCC 43589 / DSM 3109 / JCM 10099 / NBRC 100826 / MSB8), this protein is 4-hydroxy-3-methylbut-2-en-1-yl diphosphate synthase (flavodoxin).